The primary structure comprises 42 residues: Crotamine-IV-3 (42 aa).

3 disulfide bridges follow: cysteine 4–cysteine 37, cysteine 11–cysteine 31, and cysteine 19–cysteine 38.

It belongs to the crotamine-myotoxin family. In terms of assembly, monomer. In terms of tissue distribution, expressed by the venom gland.

The protein localises to the secreted. Functionally, cationic peptide that possesses multiple functions. It acts as a cell-penetrating peptide (CPP), and as a potent voltage-gated potassium channel (Kv) inhibitor. It exhibits antimicrobial activities, and hind limb paralysis. It also induces potent blockade of neuromuscular transmission in young chicken biventer cervicis preparation and potent myotoxic effect. In mice, it induces myonecrosis, upon intramuscular or subcutaneous injections. This is Crotamine-IV-3 from Crotalus durissus cumanensis (South American rattlesnake).